The chain runs to 469 residues: 3-isopropylmalate dehydratase large subunit (469 aa).

[4Fe-4S] cluster is bound by residues C347, C410, and C413.

The protein belongs to the aconitase/IPM isomerase family. LeuC type 1 subfamily. As to quaternary structure, heterodimer of LeuC and LeuD. [4Fe-4S] cluster serves as cofactor.

The enzyme catalyses (2R,3S)-3-isopropylmalate = (2S)-2-isopropylmalate. Its pathway is amino-acid biosynthesis; L-leucine biosynthesis; L-leucine from 3-methyl-2-oxobutanoate: step 2/4. In terms of biological role, catalyzes the isomerization between 2-isopropylmalate and 3-isopropylmalate, via the formation of 2-isopropylmaleate. In Burkholderia orbicola (strain MC0-3), this protein is 3-isopropylmalate dehydratase large subunit.